The chain runs to 149 residues: Large ribosomal subunit protein uL13 (149 aa).

The protein belongs to the universal ribosomal protein uL13 family. As to quaternary structure, part of the 50S ribosomal subunit.

Its function is as follows. This protein is one of the early assembly proteins of the 50S ribosomal subunit, although it is not seen to bind rRNA by itself. It is important during the early stages of 50S assembly. The polypeptide is Large ribosomal subunit protein uL13 (Chlorobium limicola (strain DSM 245 / NBRC 103803 / 6330)).